The following is a 434-amino-acid chain: Putative polysaccharide biosynthesis protein with aminopeptidase-like domain (434 aa).

Aminopeptidase-like stretches follow at residues 1–55 and 57–355; these read MEEI…IHEV and SGTK…IENN. An insert region spans residues 56–164; that stretch reads KSGTKVFDWT…VVIDSSLEDG (109 aa). Zn(2+) contacts are provided by His189, Asp195, and His324. Residues 356 to 434 form a permutated winged helix-turn-helix region; it reads RTYLNLNPKC…LYRVELLKLV (79 aa).

It belongs to the UPF0770 family. Homotrimer. The cofactor is Zn(2+).

The genomic context suggests a role in the biosynthesis of modified polysaccharides; this association with genes involved in carbohydrate metabolism is observed in several phylogenetically distinct taxa. Is not expected to have peptidase activity despite low similarity to aminopeptidases. The polypeptide is Putative polysaccharide biosynthesis protein with aminopeptidase-like domain (Clostridium acetobutylicum (strain ATCC 824 / DSM 792 / JCM 1419 / IAM 19013 / LMG 5710 / NBRC 13948 / NRRL B-527 / VKM B-1787 / 2291 / W)).